Consider the following 493-residue polypeptide: Dynein regulatory complex subunit 2 (493 aa).

2 coiled-coil regions span residues 99 to 163 and 253 to 280; these read DSVI…RKLI and KDEKSSKEIETQMKKIQKLQETIGILKG.

It belongs to the DRC2 family. As to quaternary structure, component of the nexin-dynein regulatory complex (N-DRC). Interacts with DRC1.

It localises to the cytoplasm. Its subcellular location is the cytoskeleton. It is found in the flagellum basal body. The protein localises to the cell projection. The protein resides in the cilium. It localises to the flagellum. Its subcellular location is the flagellum axoneme. Its function is as follows. Component of the nexin-dynein regulatory complex (N-DRC), a key regulator of ciliary/flagellar motility which maintains the alignment and integrity of the distal axoneme and regulates microtubule sliding in motile axonemes. Plays a critical role in the assembly of N-DRC and also stabilizes the assembly of multiple inner dynein arms and radial spokes. Coassembles with DRC1 to form a central scaffold needed for assembly of the N-DRC and its attachment to the outer doublet microtubules. In Mus musculus (Mouse), this protein is Dynein regulatory complex subunit 2 (Ccdc65).